A 249-amino-acid chain; its full sequence is Secreted flagellin C (249 aa).

Interacts with FliS.

The protein resides in the secreted. Its function is as follows. Might play a role in virulence. The sequence is that of Secreted flagellin C (flaC) from Campylobacter jejuni subsp. jejuni serotype O:6 (strain 81116 / NCTC 11828).